Reading from the N-terminus, the 154-residue chain is Urease accessory protein UreE (154 aa).

The disordered stretch occupies residues 135–154; the sequence is YGHGRTFGHDHGHAHDHHHA.

It belongs to the UreE family.

It localises to the cytoplasm. In terms of biological role, involved in urease metallocenter assembly. Binds nickel. Probably functions as a nickel donor during metallocenter assembly. This is Urease accessory protein UreE from Paracoccus denitrificans (strain Pd 1222).